Here is a 492-residue protein sequence, read N- to C-terminus: Putative sucrose transport protein SUC6 (492 aa).

The segment at 1-26 (MSDLQANKDAAAVNRQSSSSSADLNG) is disordered. Topologically, residues 1–33 (MSDLQANKDAAAVNRQSSSSSADLNGPSPMRKM) are cytoplasmic. The span at 14–23 (NRQSSSSSAD) shows a compositional bias: polar residues. S17 is subject to Phosphoserine. The helical transmembrane segment at 34 to 54 (ISVASIAAGIQFGWALQLSLL) threads the bilayer. The Extracellular portion of the chain corresponds to 55 to 68 (TPYVQLLGVPHKWS). The chain crosses the membrane as a helical span at residues 69-89 (SFIWLCGPVSGLLVQPSVGYF). The Cytoplasmic portion of the chain corresponds to 90–101 (SDRCKSRFGRRR). The helical transmembrane segment at 102-122 (PFIAMGALLVAVAVVLIGYAA) threads the bilayer. The Extracellular segment spans residues 123–139 (DFGHSMGDKVDEPVKMR). Residues 140 to 160 (AVVIFALGFWILDVANNTLQG) traverse the membrane as a helical segment. The Cytoplasmic portion of the chain corresponds to 161–181 (PCRAFLGDLAAGDAKKTRTAN). A helical membrane pass occupies residues 182–202 (AFFSFFMAVGNVLGYAAGSYT). At 203–224 (NLYKIFPFTMTKACDIYCANLK) the chain is on the extracellular side. The helical transmembrane segment at 225-245 (SCFFLSITLLLVVTIIALWYV) threads the bilayer. Topologically, residues 246-277 (EDKQWSPKADSDNEKTPFFGEIFGAFKVMKRP) are cytoplasmic. A helical transmembrane segment spans residues 278 to 298 (MWMLLIVTALNWIAWFPFLLY). Topologically, residues 299-324 (DTDWMGREVYGGDSKGDDKMKKLYNQ) are extracellular. A helical membrane pass occupies residues 325 to 345 (GIHVGGLGLMLNSIVLGFMSL). Residues 346-359 (GIEGISRKMGGAKR) are Cytoplasmic-facing. The chain crosses the membrane as a helical span at residues 360-380 (LWGAVNIILAVCLAMTVLVTK). At 381–403 (KAEEHRRIAGPMALPTDGIRAGA) the chain is on the extracellular side. A helical membrane pass occupies residues 404-424 (LTLFALLGIPLAITFSIPFAL). Residues 425–446 (ASIISSSSGAGQGLSLGVLNMT) are Cytoplasmic-facing. The chain crosses the membrane as a helical span at residues 447-467 (IVIPQMVVSFGVGPIDALFGG). The Extracellular portion of the chain corresponds to 468 to 469 (GN). A helical membrane pass occupies residues 470–490 (LPGFVVGAIAAAISSVVAFSV). Over 491–492 (LP) the chain is Cytoplasmic.

Belongs to the glycoside-pentoside-hexuronide (GPH) cation symporter transporter (TC 2.A.2.4) family.

It localises to the cell membrane. The protein operates within glycan biosynthesis; sucrose metabolism. In terms of biological role, may be responsible for the transport of glucosides into the cell, with the concomitant uptake of protons (symport system). Does not seem to transport sucrose. The sequence is that of Putative sucrose transport protein SUC6 from Arabidopsis thaliana (Mouse-ear cress).